The following is a 218-amino-acid chain: Ribose-5-phosphate isomerase A (218 aa).

Substrate-binding positions include 28-31, 81-84, and 94-97; these read TGST, DGAD, and KGGG. Glu103 serves as the catalytic Proton acceptor. Lys121 provides a ligand contact to substrate.

Belongs to the ribose 5-phosphate isomerase family. Homodimer.

The enzyme catalyses aldehydo-D-ribose 5-phosphate = D-ribulose 5-phosphate. Its pathway is carbohydrate degradation; pentose phosphate pathway; D-ribose 5-phosphate from D-ribulose 5-phosphate (non-oxidative stage): step 1/1. Its function is as follows. Catalyzes the reversible conversion of ribose-5-phosphate to ribulose 5-phosphate. In Psychromonas ingrahamii (strain DSM 17664 / CCUG 51855 / 37), this protein is Ribose-5-phosphate isomerase A.